Here is a 371-residue protein sequence, read N- to C-terminus: Cytochrome b (371 aa).

A run of 4 helical transmembrane segments spans residues F25–V45, W69–I90, W105–L125, and F170–I190. Residues H75 and H89 each contribute to the heme b site. Residues H174 and H188 each coordinate heme b. H193 is a binding site for a ubiquinone. The next 4 helical transmembrane spans lie at Y218–F238, L280–H300, L312–T332, and F339–P358.

Belongs to the cytochrome b family. As to quaternary structure, the cytochrome bc1 complex contains 3 respiratory subunits (MT-CYB, CYC1 and UQCRFS1), 2 core proteins (UQCRC1 and UQCRC2) and probably 6 low-molecular weight proteins. Requires heme b as cofactor.

Its subcellular location is the mitochondrion inner membrane. Functionally, component of the ubiquinol-cytochrome c reductase complex (complex III or cytochrome b-c1 complex) that is part of the mitochondrial respiratory chain. The b-c1 complex mediates electron transfer from ubiquinol to cytochrome c. Contributes to the generation of a proton gradient across the mitochondrial membrane that is then used for ATP synthesis. In Malayopython reticulatus (Reticulate python), this protein is Cytochrome b (MT-CYB).